The following is a 367-amino-acid chain: Phospho-N-acetylmuramoyl-pentapeptide-transferase (367 aa).

10 helical membrane passes run Gly-34–Leu-54, Thr-78–Ala-98, Leu-101–Tyr-121, Phe-135–Leu-155, Thr-175–Gly-195, Gly-206–Ala-226, Leu-246–Pro-266, Ile-270–Ala-290, Ile-295–Val-315, and Gln-344–Leu-364.

Belongs to the glycosyltransferase 4 family. MraY subfamily. Mg(2+) is required as a cofactor.

The protein resides in the cell inner membrane. The enzyme catalyses UDP-N-acetyl-alpha-D-muramoyl-L-alanyl-gamma-D-glutamyl-meso-2,6-diaminopimeloyl-D-alanyl-D-alanine + di-trans,octa-cis-undecaprenyl phosphate = di-trans,octa-cis-undecaprenyl diphospho-N-acetyl-alpha-D-muramoyl-L-alanyl-D-glutamyl-meso-2,6-diaminopimeloyl-D-alanyl-D-alanine + UMP. It functions in the pathway cell wall biogenesis; peptidoglycan biosynthesis. Its function is as follows. Catalyzes the initial step of the lipid cycle reactions in the biosynthesis of the cell wall peptidoglycan: transfers peptidoglycan precursor phospho-MurNAc-pentapeptide from UDP-MurNAc-pentapeptide onto the lipid carrier undecaprenyl phosphate, yielding undecaprenyl-pyrophosphoryl-MurNAc-pentapeptide, known as lipid I. This chain is Phospho-N-acetylmuramoyl-pentapeptide-transferase, found in Bradyrhizobium diazoefficiens (strain JCM 10833 / BCRC 13528 / IAM 13628 / NBRC 14792 / USDA 110).